We begin with the raw amino-acid sequence, 216 residues long: Adenylate kinase (216 aa).

10-15 (GAGKGT) is an ATP binding site. Positions 30–59 (STGDIFRKNIKEGTELGKKAKEYMDQGLLV) are NMP. Residues Thr31, Arg36, 57-59 (LLV), 85-88 (GFPR), and Gln92 contribute to the AMP site. Residues 126–163 (GRRICKSCGATYHVEFNPPKVEGVCDVCQGELYQRADD) are LID. Arg127 contributes to the ATP binding site. Cys130 and Cys133 together coordinate Zn(2+). Residue 136–137 (TY) coordinates ATP. Zn(2+) contacts are provided by Cys150 and Cys153. Residues Arg160 and Arg171 each contribute to the AMP site. Gln199 is a binding site for ATP.

This sequence belongs to the adenylate kinase family. As to quaternary structure, monomer.

Its subcellular location is the cytoplasm. It carries out the reaction AMP + ATP = 2 ADP. It functions in the pathway purine metabolism; AMP biosynthesis via salvage pathway; AMP from ADP: step 1/1. Functionally, catalyzes the reversible transfer of the terminal phosphate group between ATP and AMP. Plays an important role in cellular energy homeostasis and in adenine nucleotide metabolism. This chain is Adenylate kinase, found in Clostridioides difficile (strain 630) (Peptoclostridium difficile).